A 256-amino-acid polypeptide reads, in one-letter code: 5-keto-4-deoxy-D-glucarate aldolase (256 aa).

The active-site Proton acceptor is His-50. Residue Gln-151 participates in substrate binding. Glu-153 is a Mg(2+) binding site. Substrate contacts are provided by Ser-178 and Asp-179. Asp-179 serves as a coordination point for Mg(2+).

It belongs to the HpcH/HpaI aldolase family. KDGluc aldolase subfamily. Homohexamer; trimer of dimers. The cofactor is Mg(2+).

The catalysed reaction is 5-dehydro-4-deoxy-D-glucarate = 2-hydroxy-3-oxopropanoate + pyruvate. It carries out the reaction 2-dehydro-3-deoxy-D-glucarate = 2-hydroxy-3-oxopropanoate + pyruvate. It functions in the pathway carbohydrate acid metabolism; galactarate degradation; D-glycerate from galactarate: step 2/3. Functionally, catalyzes the reversible retro-aldol cleavage of both 5-keto-4-deoxy-D-glucarate and 2-keto-3-deoxy-D-glucarate to pyruvate and tartronic semialdehyde. The sequence is that of 5-keto-4-deoxy-D-glucarate aldolase from Escherichia coli O6:H1 (strain CFT073 / ATCC 700928 / UPEC).